The primary structure comprises 254 residues: Major prion protein (254 aa).

Positions 1–28 are cleaved as a signal peptide; it reads MANLGYWLLALFVTTCTDVGLCKKRPKP. The interval 23–38 is interaction with ADGRG6; the sequence is KKRPKPGGWNTGGSRY. The interaction with GRB2, ERI3 and SYN1 stretch occupies residues 23-231; it reads KKRPKPGGWN…SQAYYDGRRS (209 aa). The interval 24 to 107 is disordered; that stretch reads KRPKPGGWNT…QWNKPSKPKT (84 aa). 5 consecutive repeat copies span residues 51-59, 60-67, 68-75, 76-83, and 84-91. Residues 51 to 91 are 5 X 8 AA tandem repeats of P-H-G-G-G-W-G-Q; that stretch reads PQSGGTWGQPHGGGWGQPHGGGWGQPHGGGWGQPHGGGWSQ. Gly residues predominate over residues 55–95; the sequence is GTWGQPHGGGWGQPHGGGWGQPHGGGWGQPHGGGWSQGGGT. His-61, Gly-62, Gly-63, His-69, Gly-70, Gly-71, His-77, Gly-78, Gly-79, His-85, Gly-86, and Gly-87 together coordinate Cu(2+). Cys-179 and Cys-214 form a disulfide bridge. Asn-181 and Asn-197 each carry an N-linked (GlcNAc...) asparagine glycan. A lipid anchor (GPI-anchor amidated serine) is attached at Ser-231. Positions 232-254 are cleaved as a propeptide — removed in mature form; the sequence is SAVLFSSPPVILLISFLIFLIVG.

It belongs to the prion family. As to quaternary structure, monomer and homodimer. Has a tendency to aggregate into amyloid fibrils containing a cross-beta spine, formed by a steric zipper of superposed beta-strands. Soluble oligomers may represent an intermediate stage on the path to fibril formation. Copper binding may promote oligomerization. Interacts with GRB2, APP, ERI3/PRNPIP and SYN1. Mislocalized cytosolically exposed PrP interacts with MGRN1; this interaction alters MGRN1 subcellular location and causes lysosomal enlargement. Interacts with APP. Interacts with KIAA1191. Interacts with ADGRG6.

The protein localises to the cell membrane. Its subcellular location is the golgi apparatus. Functionally, its primary physiological function is unclear. May play a role in neuronal development and synaptic plasticity. May be required for neuronal myelin sheath maintenance. May promote myelin homeostasis through acting as an agonist for ADGRG6 receptor. May play a role in iron uptake and iron homeostasis. Soluble oligomers are toxic to cultured neuroblastoma cells and induce apoptosis (in vitro). Association with GPC1 (via its heparan sulfate chains) targets PRNP to lipid rafts. Also provides Cu(2+) or Zn(2+) for the ascorbate-mediated GPC1 deaminase degradation of its heparan sulfate side chains. The chain is Major prion protein (Prnp) from Rattus norvegicus (Rat).